The sequence spans 1124 residues: Phytochrome A (1124 aa).

Residues 1–19 (MSTTRPSQSSNNSGRSRNS) show a composition bias toward low complexity. The tract at residues 1–21 (MSTTRPSQSSNNSGRSRNSAR) is disordered. The 184-residue stretch at 218 to 401 (SMERLCDTMV…VFAIHVNKEI (184 aa)) folds into the GAF domain. Residue Cys-323 coordinates phytochromobilin. PAS domains are found at residues 617–687 (VTSE…LQGE) and 750–821 (DYKA…VNFG). The Histidine kinase domain maps to 901–1120 (YMKRQIRNPL…ILSVELAAAH (220 aa)).

Belongs to the phytochrome family. In terms of assembly, homodimer. Post-translationally, contains one covalently linked phytochromobilin chromophore.

Regulatory photoreceptor which exists in two forms that are reversibly interconvertible by light: the Pr form that absorbs maximally in the red region of the spectrum and the Pfr form that absorbs maximally in the far-red region. Photoconversion of Pr to Pfr induces an array of morphogenic responses, whereas reconversion of Pfr to Pr cancels the induction of those responses. Pfr controls the expression of a number of nuclear genes including those encoding the small subunit of ribulose-bisphosphate carboxylase, chlorophyll A/B binding protein, protochlorophyllide reductase, rRNA, etc. It also controls the expression of its own gene(s) in a negative feedback fashion. In Pisum sativum (Garden pea), this protein is Phytochrome A (PHYA).